The following is an 82-amino-acid chain: Penaeidin-3d (82 aa).

The first 19 residues, 1–19, serve as a signal peptide directing secretion; that stretch reads MRLVVCLVFLASFALVCQG. The residue at position 20 (Gln20) is a Pyrrolidone carboxylic acid. 3 cysteine pairs are disulfide-bonded: Cys51–Cys66, Cys55–Cys73, and Cys67–Cys74. The residue at position 81 (Ser81) is a Serine amide.

This sequence belongs to the penaeidin family.

It localises to the cytoplasmic granule. Functionally, antibacterial and antifungal activity. Presents chitin-binding activity. This chain is Penaeidin-3d, found in Penaeus vannamei (Whiteleg shrimp).